The primary structure comprises 295 residues: MDQKQIEEIVRSVMASMGQAAPAPSEAKCATTNCAAPVTSESCALDLGSAEAKAWIGVENPHRADVLTELRRSTVARVCTGRTGPRPRTQALLRFLADHSRSKDTVLKEVPEEWVKAQGLLEVRSEISDKNLYLTRPDMGRRLCAEAVEALKAQCVANPDVQVVISDGLSTDAITVNYEEILPPLMAGLKQAGLKVGTPFFVRYGRVKIEDQIGEILGAKVVILLVGERPGLGQSESLSCYAVYSPRMATTVEADRTCISNIHQGGTPPVEAAAVIVDLAKRMLEQKASGINMTR.

Residues V207, E228, and C258 each coordinate adenosylcob(III)alamin.

It belongs to the EutC family. The basic unit is a heterodimer which dimerizes to form tetramers. The heterotetramers trimerize; 6 large subunits form a core ring with 6 small subunits projecting outwards. Adenosylcob(III)alamin is required as a cofactor.

It localises to the bacterial microcompartment. The catalysed reaction is ethanolamine = acetaldehyde + NH4(+). Its pathway is amine and polyamine degradation; ethanolamine degradation. In terms of biological role, catalyzes the deamination of various vicinal amino-alcohols to oxo compounds. Allows this organism to utilize ethanolamine as the sole source of nitrogen and carbon in the presence of external vitamin B12. This chain is Ethanolamine ammonia-lyase small subunit, found in Shigella sonnei (strain Ss046).